A 98-amino-acid chain; its full sequence is Large ribosomal subunit protein uL23 (98 aa).

This sequence belongs to the universal ribosomal protein uL23 family. As to quaternary structure, part of the 50S ribosomal subunit. Contacts protein L29, and trigger factor when it is bound to the ribosome.

Its function is as follows. One of the early assembly proteins it binds 23S rRNA. One of the proteins that surrounds the polypeptide exit tunnel on the outside of the ribosome. Forms the main docking site for trigger factor binding to the ribosome. The polypeptide is Large ribosomal subunit protein uL23 (Methylorubrum extorquens (strain CM4 / NCIMB 13688) (Methylobacterium extorquens)).